The primary structure comprises 244 residues: Probable transcriptional regulatory protein XF_1906 (244 aa).

It belongs to the TACO1 family.

It localises to the cytoplasm. This chain is Probable transcriptional regulatory protein XF_1906, found in Xylella fastidiosa (strain 9a5c).